The following is a 615-amino-acid chain: Chaperone protein DnaK (615 aa).

Thr195 carries the phosphothreonine; by autocatalysis modification. Residues 592–615 (EKGAQAASGKGPDDVIDADYKPAD) are disordered.

Belongs to the heat shock protein 70 family.

Acts as a chaperone. The chain is Chaperone protein DnaK from Thermus thermophilus (strain ATCC BAA-163 / DSM 7039 / HB27).